The primary structure comprises 329 residues: Protein phosphatase 1 regulatory subunit 42 (329 aa).

7 LRR repeats span residues 30 to 51 (KLTH…SVCR), 52 to 73 (NLTV…GFAS), 74 to 95 (NLTH…SSLH), 96 to 117 (KLSK…EELK), 118 to 139 (SLKE…AFDP), 148 to 169 (TLCI…APLR), and 170 to 191 (KMTH…ETVF). The 39-residue stretch at 205 to 243 (NPVCHKPKYRDRLITVCKFLDDLDGKQINELSRQFLINW) folds into the LRRCT domain. The interval 268 to 329 (STSADFHLGP…SSTEWQSLKI (62 aa)) is disordered. The segment covering 318–329 (GDSSTEWQSLKI) has biased composition (polar residues).

Its subcellular location is the cytoplasm. The protein localises to the cytoskeleton. It localises to the microtubule organizing center. The protein resides in the centrosome. Its function is as follows. May regulate phosphatase activity of protein phosphatase 1 (PP1) complexes. The polypeptide is Protein phosphatase 1 regulatory subunit 42 (ppp1r42) (Danio rerio (Zebrafish)).